Reading from the N-terminus, the 340-residue chain is Oxygen-dependent coproporphyrinogen-III oxidase (340 aa).

Over residues 1–14 (MTVSPTTQPQTNHS) the composition is skewed to polar residues. Positions 1–22 (MTVSPTTQPQTNHSLPPADAKQ) are disordered. A substrate-binding site is contributed by Ser-109. His-113 and His-123 together coordinate a divalent metal cation. His-123 serves as the catalytic Proton donor. 125-127 (NYR) serves as a coordination point for substrate. 2 residues coordinate a divalent metal cation: His-157 and His-187. The interval 278 to 313 (YVEFNLVYDRGTIFGLQTNGRTESILMSLPPLVRWQ) is important for dimerization. Position 296 to 298 (296 to 298 (NGR)) interacts with substrate.

This sequence belongs to the aerobic coproporphyrinogen-III oxidase family. In terms of assembly, homodimer. The cofactor is a divalent metal cation.

The protein resides in the cytoplasm. It carries out the reaction coproporphyrinogen III + O2 + 2 H(+) = protoporphyrinogen IX + 2 CO2 + 2 H2O. Its pathway is porphyrin-containing compound metabolism; protoporphyrin-IX biosynthesis; protoporphyrinogen-IX from coproporphyrinogen-III (O2 route): step 1/1. Its function is as follows. Involved in the heme and chlorophyll biosynthesis. Catalyzes the aerobic oxidative decarboxylation of propionate groups of rings A and B of coproporphyrinogen-III to yield the vinyl groups in protoporphyrinogen-IX. This chain is Oxygen-dependent coproporphyrinogen-III oxidase, found in Synechocystis sp. (strain ATCC 27184 / PCC 6803 / Kazusa).